We begin with the raw amino-acid sequence, 188 residues long: Meiotically up-regulated gene 94 protein (188 aa).

It is found in the cytoplasm. It localises to the nucleus. Functionally, has a role in meiosis. This is Meiotically up-regulated gene 94 protein (mug94) from Schizosaccharomyces pombe (strain 972 / ATCC 24843) (Fission yeast).